The following is a 349-amino-acid chain: tRNA pseudouridine synthase D (349 aa).

Phe27 lines the substrate pocket. The active-site Nucleophile is the Asp80. Asn129 serves as a coordination point for substrate. One can recognise a TRUD domain in the interval 155-303; it reads GVPNYFGAQR…VEAARRAMLL (149 aa). A substrate-binding site is contributed by Phe329.

Belongs to the pseudouridine synthase TruD family.

It catalyses the reaction uridine(13) in tRNA = pseudouridine(13) in tRNA. In terms of biological role, responsible for synthesis of pseudouridine from uracil-13 in transfer RNAs. The polypeptide is tRNA pseudouridine synthase D (Escherichia coli (strain 55989 / EAEC)).